The sequence spans 545 residues: ATP synthase subunit alpha, mitochondrial (545 aa).

A mitochondrion-targeting transit peptide spans 1 to 35 (MLARTAAIRSLSRTLINSTKAARPAAAALASTRRL). A phosphoserine mark is found at Ser57 and Ser178. Residue 206-213 (GDRQTGKT) participates in ATP binding.

This sequence belongs to the ATPase alpha/beta chains family. In terms of assembly, F-type ATPases have 2 components, CF(1) - the catalytic core - and CF(0) - the membrane proton channel. CF(1) has five subunits: alpha(3), beta(3), gamma(1), delta(1), epsilon(1). CF(0) has three main subunits: a, b and c.

Its subcellular location is the mitochondrion inner membrane. Functionally, mitochondrial membrane ATP synthase (F(1)F(0) ATP synthase or Complex V) produces ATP from ADP in the presence of a proton gradient across the membrane which is generated by electron transport complexes of the respiratory chain. F-type ATPases consist of two structural domains, F(1) - containing the extramembraneous catalytic core, and F(0) - containing the membrane proton channel, linked together by a central stalk and a peripheral stalk. During catalysis, ATP synthesis in the catalytic domain of F(1) is coupled via a rotary mechanism of the central stalk subunits to proton translocation. Subunits alpha and beta form the catalytic core in F(1). Rotation of the central stalk against the surrounding alpha(3)beta(3) subunits leads to hydrolysis of ATP in three separate catalytic sites on the beta subunits. Subunit alpha does not bear the catalytic high-affinity ATP-binding sites. The polypeptide is ATP synthase subunit alpha, mitochondrial (ATP1) (Saccharomyces cerevisiae (strain ATCC 204508 / S288c) (Baker's yeast)).